Here is a 511-residue protein sequence, read N- to C-terminus: MVKLRDISTIAVSESTHNFEVFSGLEGVSDTVANLKSENVEINVLGHNPGSLNILIDASPHFRDEKALSDCFGPQMGGVVYDSYDRMVMKNGRIENYPDTEIPTLDVTPLNVDRSLTPKQKENRNKCKKLFDHLLLEIQRGKITAGCVDDYFAFMHAAYCVLSKVYLPRFKYKHFEISSRLVTIHECNNNTKPSLFWSNRDDESHDYMTIIQMMVQVFSNAMTKYATSHLINEYHNDLDSPTSDILTKVVDELKDIDIEPATYATIVYLWLTGEDEIEDLDVLAVIFDECRSDGFVDNLLVRMLPPCEGASLTSEAIDTGLLYTRNDGYMVYTASMVEEDVNKMEYDRRYGLPLMEFRATNSLVTLRVDYTTKTNKQMKVQLMINKFPKFELMNTDIFSSQYLMLGKNIVIDMIKMTGHMLRGNVQSANLDTQRKLSNLVSSSHPWITRLVANRARDDVHIRFASHMITDLDNLTKREHPKTIFVESLKMLDHFGKSERYELLVYLSAADF.

The protein resides in the host cell junction. It is found in the host plasmodesma. It localises to the host cytoplasm. In terms of biological role, transports viral genome to neighboring plant cells directly through plasmosdesmata, without any budding. The movement protein allows efficient cell to cell propagation, by bypassing the host cell wall barrier. The sequence is that of Movement protein from Rice gall dwarf virus (RGDV).